The primary structure comprises 284 residues: 2-dehydro-3-deoxyphosphooctonate aldolase (284 aa).

Belongs to the KdsA family.

It localises to the cytoplasm. It catalyses the reaction D-arabinose 5-phosphate + phosphoenolpyruvate + H2O = 3-deoxy-alpha-D-manno-2-octulosonate-8-phosphate + phosphate. It participates in carbohydrate biosynthesis; 3-deoxy-D-manno-octulosonate biosynthesis; 3-deoxy-D-manno-octulosonate from D-ribulose 5-phosphate: step 2/3. It functions in the pathway bacterial outer membrane biogenesis; lipopolysaccharide biosynthesis. This Actinobacillus succinogenes (strain ATCC 55618 / DSM 22257 / CCUG 43843 / 130Z) protein is 2-dehydro-3-deoxyphosphooctonate aldolase.